The chain runs to 366 residues: tRNA/tmRNA (uracil-C(5))-methyltransferase (366 aa).

Residues Gln187, Tyr215, Asn220, Glu236, and Asp297 each coordinate S-adenosyl-L-methionine. Cys322 serves as the catalytic Nucleophile. The active-site Proton acceptor is Glu356.

It belongs to the class I-like SAM-binding methyltransferase superfamily. RNA M5U methyltransferase family. TrmA subfamily.

The enzyme catalyses uridine(54) in tRNA + S-adenosyl-L-methionine = 5-methyluridine(54) in tRNA + S-adenosyl-L-homocysteine + H(+). The catalysed reaction is uridine(341) in tmRNA + S-adenosyl-L-methionine = 5-methyluridine(341) in tmRNA + S-adenosyl-L-homocysteine + H(+). In terms of biological role, dual-specificity methyltransferase that catalyzes the formation of 5-methyluridine at position 54 (m5U54) in all tRNAs, and that of position 341 (m5U341) in tmRNA (transfer-mRNA). The chain is tRNA/tmRNA (uracil-C(5))-methyltransferase from Marinomonas sp. (strain MWYL1).